The primary structure comprises 373 residues: D-alanine--D-alanine ligase (373 aa).

In terms of domain architecture, ATP-grasp spans 156–363; sequence KKLLAAEGLP…YPTLLAAMVD (208 aa). 184 to 239 contacts ATP; that stretch reads RERLGLPVFVKPARGGSSIGVSRVTAWDELPAAVALARRHDPKVIVEAAVIGRELE. Residues aspartate 318, glutamate 330, and asparagine 332 each contribute to the Mg(2+) site.

Belongs to the D-alanine--D-alanine ligase family. It depends on Mg(2+) as a cofactor. Mn(2+) serves as cofactor.

It is found in the cytoplasm. It catalyses the reaction 2 D-alanine + ATP = D-alanyl-D-alanine + ADP + phosphate + H(+). It participates in cell wall biogenesis; peptidoglycan biosynthesis. Cell wall formation. This Mycolicibacterium smegmatis (strain ATCC 700084 / mc(2)155) (Mycobacterium smegmatis) protein is D-alanine--D-alanine ligase.